The chain runs to 324 residues: HTH-type transcriptional regulator CysB (324 aa).

One can recognise an HTH lysR-type domain in the interval 1-59; that stretch reads MKLQQLRYIVEVVNHNLNVSSTAEGLYTSQPGISKQVRMLEDELGIQIFSRSGKHLTQV. Residues 19-38 constitute a DNA-binding region (H-T-H motif); the sequence is VSSTAEGLYTSQPGISKQVR.

This sequence belongs to the LysR transcriptional regulatory family. As to quaternary structure, homotetramer.

It is found in the cytoplasm. Functionally, this protein is a positive regulator of gene expression for the cysteine regulon. The inducer for CysB is N-acetylserine. In Escherichia coli O157:H7, this protein is HTH-type transcriptional regulator CysB (cysB).